The primary structure comprises 67 residues: Beta-defensin 103A (67 aa).

The signal sequence occupies residues 1–22; the sequence is MRIHFLLFALLFLFLMPVPGNG. 3 disulfides stabilise this stretch: cysteine 33–cysteine 62, cysteine 40–cysteine 55, and cysteine 45–cysteine 63.

Belongs to the beta-defensin family.

The protein resides in the secreted. In terms of biological role, exhibits antimicrobial activity against Gram-positive and Gram-negative bacteria. This is Beta-defensin 103A (DEFB103A) from Equus caballus (Horse).